The sequence spans 328 residues: Formimidoylglutamase (328 aa).

Residues H133, D159, H161, D163, D253, and D255 each coordinate Mn(2+).

This sequence belongs to the arginase family. Mn(2+) is required as a cofactor.

It carries out the reaction N-formimidoyl-L-glutamate + H2O = formamide + L-glutamate. It functions in the pathway amino-acid degradation; L-histidine degradation into L-glutamate; L-glutamate from N-formimidoyl-L-glutamate (hydrolase route): step 1/1. Catalyzes the conversion of N-formimidoyl-L-glutamate to L-glutamate and formamide. The polypeptide is Formimidoylglutamase (Streptococcus pyogenes serotype M3 (strain ATCC BAA-595 / MGAS315)).